A 370-amino-acid chain; its full sequence is Mitogen-activated protein kinase 3 (370 aa).

A Protein kinase domain is found at 38-324 (RPPIIPIGRG…VEQALNHQYL (287 aa)). Residues 44 to 52 (IGRGAYGIV) and lysine 67 each bind ATP. Catalysis depends on aspartate 164, which acts as the Proton acceptor. Position 196 is a phosphothreonine (threonine 196). A TXY motif is present at residues 196 to 198 (TEY). Tyrosine 198 carries the post-translational modification Phosphotyrosine. Residue threonine 201 is modified to Phosphothreonine.

Belongs to the protein kinase superfamily. CMGC Ser/Thr protein kinase family. MAP kinase subfamily. As to quaternary structure, interacts with DSPTP1B/MKP2, NDPK2 and VIP1. The interaction with DSPTP1B/MKP2 is repressed by fungal elicitation. Binds to LIP5. Interacts with VQ4. Interacts with RACK1A, RACK1B and RACK1C. Interacts with FLZ9. Interacts with MKK5. Post-translationally, dually phosphorylated on Thr-196 and Tyr-198, which activates the enzyme. Dephosphorylated by DSPTP1B/MKP2.

The protein resides in the cytoplasm. It is found in the nucleus. Its subcellular location is the cell cortex. The enzyme catalyses L-seryl-[protein] + ATP = O-phospho-L-seryl-[protein] + ADP + H(+). It catalyses the reaction L-threonyl-[protein] + ATP = O-phospho-L-threonyl-[protein] + ADP + H(+). With respect to regulation, activated by threonine and tyrosine phosphorylation. Activated by MAP kinase kinases MKK4, MKK5, MKK7 and MKK9. Activated in response to hydrogen peroxide, ozone, salt stress and flagellin bacterial elicitor. Triggered by Agrobacterium upon T-DNA transfer. Repressed by DSPTP1B/MKP2-mediated dephosphorylation. Its function is as follows. Involved in oxidative stress-mediated signaling cascade (such as ozone). Involved in the innate immune MAP kinase signaling cascade (MEKK1, MKK4/MKK5 and MPK3/MPK6) downstream of bacterial flagellin receptor FLS2. May be involved in hypersensitive response (HR)-mediated signaling cascade by modulating LIP5 phosphorylation and subsequent multivesicular bodies (MVBs) trafficking. May phosphorylate regulators of WRKY transcription factors. Mediates the phosphorylation of VIP1 and subsequent stress genes transcription in response to Agrobacterium. MKK9-MPK3/MPK6 module phosphorylates and activates EIN3, leading to the promotion of EIN3-mediated transcription in ethylene signaling. MPK3/MPK6 cascade regulates camalexin synthesis through transcriptional regulation of the biosynthetic genes after pathogen infection. YDA-MKK4/MKK5-MPK3/MPK6 module regulates stomatal cell fate before the guard mother cell (GMC) is specified. When activated, reinforces the feedback loop by phosphorylating BASL, and inhibits stomatal fate by phosphorylating SPCH. This MAPK cascade also functions downstream of the ER receptor in regulating coordinated local cell proliferation, which shapes the morphology of plant organs. The protein is Mitogen-activated protein kinase 3 of Arabidopsis thaliana (Mouse-ear cress).